A 637-amino-acid chain; its full sequence is Chaperone protein HtpG (637 aa).

Residues 1–345 form an a; substrate-binding region; it reads MSQQETHGFQ…SNDLPLNVSR (345 aa). The tract at residues 346-562 is b; it reads EILQDNHITK…EGEMSSQMIK (217 aa). Residues 563–637 form a c region; it reads LMQAAGQPVP…MNQMLLANLK (75 aa).

This sequence belongs to the heat shock protein 90 family. In terms of assembly, homodimer.

Its subcellular location is the cytoplasm. In terms of biological role, molecular chaperone. Has ATPase activity. The protein is Chaperone protein HtpG of Shewanella sp. (strain ANA-3).